Consider the following 404-residue polypeptide: Riboflavin biosynthesis protein RibBA (404 aa).

The interval 1 to 204 is DHBP synthase; sequence MEELKLNTIE…IRDLIAYRLK (204 aa). D-ribulose 5-phosphate-binding positions include 30–31, D35, 143–147, and E167; these read RE and RAGHT. E31 serves as a coordination point for Mg(2+). Mg(2+) is bound at residue H146. The interval 205-404 is GTP cyclohydrolase II; the sequence is QESLVEKGVE…RMGHTLHFNK (200 aa). 255–259 contributes to the GTP binding site; it reads RVHSS. The Zn(2+) site is built by C260, C271, and C273. GTP is bound by residues Q276, 298–300, and T320; that span reads EGR. D332 serves as the catalytic Proton acceptor; for GTP cyclohydrolase activity. R334 functions as the Nucleophile; for GTP cyclohydrolase activity in the catalytic mechanism. GTP contacts are provided by T355 and K360.

The protein in the N-terminal section; belongs to the DHBP synthase family. In the C-terminal section; belongs to the GTP cyclohydrolase II family. It depends on Mg(2+) as a cofactor. Mn(2+) serves as cofactor. The cofactor is Zn(2+).

The catalysed reaction is D-ribulose 5-phosphate = (2S)-2-hydroxy-3-oxobutyl phosphate + formate + H(+). The enzyme catalyses GTP + 4 H2O = 2,5-diamino-6-hydroxy-4-(5-phosphoribosylamino)-pyrimidine + formate + 2 phosphate + 3 H(+). It participates in cofactor biosynthesis; riboflavin biosynthesis; 2-hydroxy-3-oxobutyl phosphate from D-ribulose 5-phosphate: step 1/1. It functions in the pathway cofactor biosynthesis; riboflavin biosynthesis; 5-amino-6-(D-ribitylamino)uracil from GTP: step 1/4. Its function is as follows. Catalyzes the conversion of D-ribulose 5-phosphate to formate and 3,4-dihydroxy-2-butanone 4-phosphate. Functionally, catalyzes the conversion of GTP to 2,5-diamino-6-ribosylamino-4(3H)-pyrimidinone 5'-phosphate (DARP), formate and pyrophosphate. This chain is Riboflavin biosynthesis protein RibBA, found in Phocaeicola vulgatus (strain ATCC 8482 / DSM 1447 / JCM 5826 / CCUG 4940 / NBRC 14291 / NCTC 11154) (Bacteroides vulgatus).